Here is a 408-residue protein sequence, read N- to C-terminus: Putative ankyrin repeat protein L483 (408 aa).

11 ANK repeats span residues Ser-78–Ala-107, Gly-108–Ala-137, Asn-139–Ala-167, Asn-168–Thr-197, Glu-198–Ala-227, Asn-229–Val-257, Asn-259–Ala-287, Arg-288–Ser-317, Gln-318–Thr-347, Asp-349–Ala-377, and Lys-378–Lys-407.

This Acanthamoeba polyphaga (Amoeba) protein is Putative ankyrin repeat protein L483.